We begin with the raw amino-acid sequence, 179 residues long: Acireductone dioxygenase (179 aa).

The Fe(2+) site is built by His-85, His-87, Glu-91, and His-132. The Ni(2+) site is built by His-85, His-87, Glu-91, and His-132.

It belongs to the acireductone dioxygenase (ARD) family. Fe(2+) is required as a cofactor. Requires Ni(2+) as cofactor.

The protein resides in the cytoplasm. It localises to the nucleus. It carries out the reaction 1,2-dihydroxy-5-(methylsulfanyl)pent-1-en-3-one + O2 = 4-methylsulfanyl-2-oxobutanoate + formate + 2 H(+). It catalyses the reaction 1,2-dihydroxy-5-(methylsulfanyl)pent-1-en-3-one + O2 = 3-(methylsulfanyl)propanoate + CO + formate + 2 H(+). It participates in amino-acid biosynthesis; L-methionine biosynthesis via salvage pathway; L-methionine from S-methyl-5-thio-alpha-D-ribose 1-phosphate: step 5/6. Catalyzes 2 different reactions between oxygen and the acireductone 1,2-dihydroxy-3-keto-5-methylthiopentene (DHK-MTPene) depending upon the metal bound in the active site. Fe-containing acireductone dioxygenase (Fe-ARD) produces formate and 2-keto-4-methylthiobutyrate (KMTB), the alpha-ketoacid precursor of methionine in the methionine recycle pathway. Ni-containing acireductone dioxygenase (Ni-ARD) produces methylthiopropionate, carbon monoxide and formate, and does not lie on the methionine recycle pathway. In Saccharomyces cerevisiae (strain ATCC 204508 / S288c) (Baker's yeast), this protein is Acireductone dioxygenase.